The chain runs to 402 residues: Metacaspase-1 (402 aa).

The disordered stretch occupies residues 1–79 (MAYPGQGGHH…FAPPSGPIGP (79 aa)). The span at 23 to 45 (PAPHGYAQPGYGYAPPSGPPQGY) shows a compositional bias: low complexity. Active-site residues include His-193 and Cys-249.

Belongs to the peptidase C14B family.

Involved in cell death (apoptosis). The chain is Metacaspase-1 (MCA1) from Mycosarcoma maydis (Corn smut fungus).